A 418-amino-acid polypeptide reads, in one-letter code: MIFDKDDFKAYDADLWNAIAKEEERQQNNIELIASENVVSKAVMAAQGSILTNKYAEGYPGRRYYGGTDVVDVVETLAIERAKEIFGAKFANVQPHSGSQANCAAYISLIEPGDTVMGMDLASGGHLTHGAPVSFSGQTYNFVSYSVDPETELLDFDAILKQAQEVKPKLIVAGASAYSQIIDFSKFREIADAVGAKLMVDMAHIAGLVAAGLHPSPVPYAHITTTTTHKTLRGPRGGLILTNDEELAKKINSAIFPGIQGGPLEHVVAAKAVSFKEVLDPAFKEYAANVIKNSKAMADVFLQDPDFRIISGGTENHLFLVDVTKVVENGKVAQNLLDEVNITLNKNSIPYETLSPFKTSGIRIGAAAITARGFGEEESRKVAELIIKTLKNSENEAVLEEVRSAVKELTDAFPLYEE.

(6S)-5,6,7,8-tetrahydrofolate is bound by residues L121 and 125-127 (GHL). K230 carries the N6-(pyridoxal phosphate)lysine modification. (6S)-5,6,7,8-tetrahydrofolate-binding positions include E246 and 355–357 (SPF).

Belongs to the SHMT family. In terms of assembly, homodimer. It depends on pyridoxal 5'-phosphate as a cofactor.

It localises to the cytoplasm. It carries out the reaction (6R)-5,10-methylene-5,6,7,8-tetrahydrofolate + glycine + H2O = (6S)-5,6,7,8-tetrahydrofolate + L-serine. It participates in one-carbon metabolism; tetrahydrofolate interconversion. It functions in the pathway amino-acid biosynthesis; glycine biosynthesis; glycine from L-serine: step 1/1. In terms of biological role, catalyzes the reversible interconversion of serine and glycine with tetrahydrofolate (THF) serving as the one-carbon carrier. This reaction serves as the major source of one-carbon groups required for the biosynthesis of purines, thymidylate, methionine, and other important biomolecules. Also exhibits THF-independent aldolase activity toward beta-hydroxyamino acids, producing glycine and aldehydes, via a retro-aldol mechanism. In Streptococcus pneumoniae (strain Hungary19A-6), this protein is Serine hydroxymethyltransferase.